A 127-amino-acid chain; its full sequence is ALK and LTK ligand 1 (127 aa).

Positions 1–27 are cleaved as a signal peptide; that stretch reads MWLTKPSTPVSALLLLALALSPPGTQG. Cystine bridges form between Cys88-Cys124 and Cys102-Cys111.

This sequence belongs to the ALKAL family.

It is found in the secreted. It localises to the cell membrane. Functionally, cytokine that acts as a physiological ligand for receptor tyrosine kinase LTK, leading to its activation. Monomeric ALKAL1 binds to LTK, leading to LTK homodimerization and activation. In contrast to ALKAL2, does not act as a potent physiological ligand for ALK. The protein is ALK and LTK ligand 1 of Mus musculus (Mouse).